The chain runs to 225 residues: MTPRLRLQPESVGIGMTSQRVRDRLVERLREAGIQDEATLNAMRTVPRHLFIDEALASRAYEDTALPIGHGQTISQPWVVARMTEAVLQVTPAKVLEVGTGSGYQGAILAALGLEVYTVERIGDLLRQARKRFRHLGMNVRSKHDDGRIGWPEHGPYDAIVVTAAAPALVDALVDQLAVGGRLVAPVGGPSSQSLVQLTRGADGAIEQQVLAPVTFVPLLSGMLD.

Residue Ser75 is part of the active site.

The protein belongs to the methyltransferase superfamily. L-isoaspartyl/D-aspartyl protein methyltransferase family.

The protein resides in the cytoplasm. The catalysed reaction is [protein]-L-isoaspartate + S-adenosyl-L-methionine = [protein]-L-isoaspartate alpha-methyl ester + S-adenosyl-L-homocysteine. Catalyzes the methyl esterification of L-isoaspartyl residues in peptides and proteins that result from spontaneous decomposition of normal L-aspartyl and L-asparaginyl residues. It plays a role in the repair and/or degradation of damaged proteins. The polypeptide is Protein-L-isoaspartate O-methyltransferase (Xanthomonas euvesicatoria pv. vesicatoria (strain 85-10) (Xanthomonas campestris pv. vesicatoria)).